A 243-amino-acid polypeptide reads, in one-letter code: Phomoidride biosynthesis cluster protein B (243 aa).

Belongs to the tstB family.

Phosphatidylethanolamine-binding protein; part of the gene cluster that mediates the biosynthesis of the antihypercholesterolemic agents phomoidrides which are dimeric anhydrides. Within the pathway, tstB is not essential for dimerization and its function has still to be determined. The pathway begins with the highly reducing polyketide synthase tstA that catalyzes the formation of a C12-fatty acyl-ACP, starting from one acetate and 5 malonate units. The hydrolase tstM is involved in the release of the C12-fatty acyl chain from phiA. The alkylcitrate synthase (ACS) tstJ and the alkylcitrate dehydratase (ACDH) tstI then give rise to decarboxylated monomeric anhydrides by coupling the C12-fatty acyl chain with oxalacetic acid. The cyclase tstC is responsible for the dimerization of the monomeric anhydrides which leads to the production of prephomoidride that contains the characteristic bicyclo[4.3.1]deca-1,6-diene system of phomoidrides. Iterative oxidation catalyzed by the alpha-ketoglutarate-dependent dioxygenase tstK produced then phomoidride A. Finally, the methyltransferase tstE converts phomoidride A to phomoidride B via an acetalization reaction. The phosphatidylethanolamine-binding protein tstB and tstN are not essential for dimerization and their functions have still to be determined. This chain is Phomoidride biosynthesis cluster protein B, found in Talaromyces stipitatus (strain ATCC 10500 / CBS 375.48 / QM 6759 / NRRL 1006) (Penicillium stipitatum).